We begin with the raw amino-acid sequence, 317 residues long: Putative methyltransferase YMR310C (317 aa).

Serine 190 is subject to Phosphoserine.

It belongs to the class IV-like SAM-binding methyltransferase superfamily.

The protein resides in the nucleus. The chain is Putative methyltransferase YMR310C from Saccharomyces cerevisiae (strain ATCC 204508 / S288c) (Baker's yeast).